Consider the following 625-residue polypeptide: 1-deoxy-D-xylulose-5-phosphate synthase (625 aa).

Thiamine diphosphate contacts are provided by residues H80 and G121–S123. D152 serves as a coordination point for Mg(2+). Thiamine diphosphate contacts are provided by residues G153 to A154, N181, Y288, and E370. N181 serves as a coordination point for Mg(2+).

Belongs to the transketolase family. DXPS subfamily. In terms of assembly, homodimer. The cofactor is Mg(2+). Requires thiamine diphosphate as cofactor.

The catalysed reaction is D-glyceraldehyde 3-phosphate + pyruvate + H(+) = 1-deoxy-D-xylulose 5-phosphate + CO2. Its pathway is metabolic intermediate biosynthesis; 1-deoxy-D-xylulose 5-phosphate biosynthesis; 1-deoxy-D-xylulose 5-phosphate from D-glyceraldehyde 3-phosphate and pyruvate: step 1/1. In terms of biological role, catalyzes the acyloin condensation reaction between C atoms 2 and 3 of pyruvate and glyceraldehyde 3-phosphate to yield 1-deoxy-D-xylulose-5-phosphate (DXP). The protein is 1-deoxy-D-xylulose-5-phosphate synthase of Alteromonas mediterranea (strain DSM 17117 / CIP 110805 / LMG 28347 / Deep ecotype).